Here is a 47-residue protein sequence, read N- to C-terminus: Large ribosomal subunit protein bL27c-2 (47 aa).

This sequence belongs to the bacterial ribosomal protein bL27 family.

It is found in the plastid. The protein resides in the chloroplast. This is Large ribosomal subunit protein bL27c-2 from Cyanidium caldarium (Red alga).